Reading from the N-terminus, the 548-residue chain is 2-succinyl-5-enolpyruvyl-6-hydroxy-3-cyclohexene-1-carboxylate synthase (548 aa).

It belongs to the TPP enzyme family. MenD subfamily. Homodimer. Requires Mg(2+) as cofactor. Mn(2+) is required as a cofactor. It depends on thiamine diphosphate as a cofactor.

The enzyme catalyses isochorismate + 2-oxoglutarate + H(+) = 5-enolpyruvoyl-6-hydroxy-2-succinyl-cyclohex-3-ene-1-carboxylate + CO2. It functions in the pathway quinol/quinone metabolism; 1,4-dihydroxy-2-naphthoate biosynthesis; 1,4-dihydroxy-2-naphthoate from chorismate: step 2/7. It participates in quinol/quinone metabolism; menaquinone biosynthesis. Its function is as follows. Catalyzes the thiamine diphosphate-dependent decarboxylation of 2-oxoglutarate and the subsequent addition of the resulting succinic semialdehyde-thiamine pyrophosphate anion to isochorismate to yield 2-succinyl-5-enolpyruvyl-6-hydroxy-3-cyclohexene-1-carboxylate (SEPHCHC). The chain is 2-succinyl-5-enolpyruvyl-6-hydroxy-3-cyclohexene-1-carboxylate synthase from Mycobacterium marinum (strain ATCC BAA-535 / M).